Here is a 103-residue protein sequence, read N- to C-terminus: Non-histone chromosomal protein 6 (103 aa).

Disordered regions lie at residues 1–30 (MPKA…KRGL) and 70–103 (KQRA…EESS). Positions 26–94 (PKRGLSAYMF…RYEDEKQAYN (69 aa)) form a DNA-binding region, HMG box. Positions 70 to 91 (KQRAPYEAKAAADKKRYEDEKQ) are enriched in basic and acidic residues.

Belongs to the NHP6 family. As to quaternary structure, weakly associates with the stable heterodimer of ctc-1/pob3 and ctc-2/spt16 to form the FACT complex.

The protein localises to the nucleus. Its subcellular location is the chromosome. DNA-binding protein that induces severe bending of DNA. Required for DNA-binding by the FACT complex, a general chromatin factor that acts to reorganize nucleosomes. The FACT complex is involved in multiple processes that require DNA as a template such as mRNA elongation, DNA replication and DNA repair. Also augments the fidelity of transcription by RNA polymerase III independently of any role in the FACT complex. This Neurospora crassa (strain ATCC 24698 / 74-OR23-1A / CBS 708.71 / DSM 1257 / FGSC 987) protein is Non-histone chromosomal protein 6 (nhp-1).